A 193-amino-acid chain; its full sequence is Bcl-2-like protein 2 (193 aa).

Residue alanine 2 is modified to N-acetylalanine. The short motif at 9–29 (DTRALVADFVGYKLRQKGYVC) is the BH4 element. Residues 85-104 (ELFQGGPNWGRLVAFFVFGA) carry the BH1 motif. A BH2 motif is present at residues 136-151 (DWIHSSGGWAEFTALY).

The protein belongs to the Bcl-2 family. As to quaternary structure, interacts with HIF3A isoform 2 (via C-terminus domain). Interacts with BOP. Expressed in almost all myeloid cell lines and in a wide range of tissues, with highest levels in brain, colon, and salivary gland.

It is found in the mitochondrion membrane. Its function is as follows. Promotes cell survival. Blocks dexamethasone-induced apoptosis. Mediates survival of postmitotic Sertoli cells by suppressing death-promoting activity of BAX. The polypeptide is Bcl-2-like protein 2 (Bcl2l2) (Mus musculus (Mouse)).